The chain runs to 504 residues: Peroxisomal N(1)-acetyl-spermine/spermidine oxidase (504 aa).

Residues alanine 16, glutamate 37, arginine 45, and 61–62 each bind FAD; that span reads HW. Positions 64 and 187 each coordinate substrate. FAD is bound at residue valine 240. Residue asparagine 313 participates in substrate binding. Residues glutamate 465 and 474 to 475 each bind FAD; that span reads TT. The short motif at 502-504 is the Microbody targeting signal element; sequence PRL.

It belongs to the flavin monoamine oxidase family. As to quaternary structure, monomer. FAD is required as a cofactor. As to expression, widely expressed at different developmental stages. Expressed at high level in the liver and the stomach, expressed at lower level in heart, spleen, thymus, small intestine, muscle, pancreas, uterus, and breast and expressed at very low level in brain, kidney, lung, testis, skin, adrenal gland and prostate gland.

It is found in the peroxisome. It localises to the cytoplasm. The catalysed reaction is N(1)-acetylspermine + O2 + H2O = 3-acetamidopropanal + spermidine + H2O2. It carries out the reaction N(1)-acetylspermidine + O2 + H2O = 3-acetamidopropanal + putrescine + H2O2. It catalyses the reaction N(1),N(12)-diacetylspermine + O2 + H2O = 3-acetamidopropanal + N(1)-acetylspermidine + H2O2. The protein operates within amine and polyamine metabolism; spermine metabolism. Functionally, flavoenzyme which catalyzes the oxidation of N(1)-acetylspermine to spermidine and is thus involved in the polyamine back-conversion. Can also oxidize N(1)-acetylspermidine to putrescine. Substrate specificity: N(1)-acetylspermine = N(1)-acetylspermidine &gt; N(1),N(12)-diacylspermine &gt;&gt; spermine. Does not oxidize spermidine. Plays an important role in the regulation of polyamine intracellular concentration and has the potential to act as a determinant of cellular sensitivity to the antitumor polyamine analogs. In Mus musculus (Mouse), this protein is Peroxisomal N(1)-acetyl-spermine/spermidine oxidase (Paox).